Reading from the N-terminus, the 912-residue chain is Phosphoenolpyruvate carboxylase (912 aa).

Catalysis depends on residues H138 and K575.

The protein belongs to the PEPCase type 1 family. Mg(2+) is required as a cofactor.

It carries out the reaction oxaloacetate + phosphate = phosphoenolpyruvate + hydrogencarbonate. Its function is as follows. Forms oxaloacetate, a four-carbon dicarboxylic acid source for the tricarboxylic acid cycle. The chain is Phosphoenolpyruvate carboxylase from Lactobacillus acidophilus (strain ATCC 700396 / NCK56 / N2 / NCFM).